Consider the following 174-residue polypeptide: Adenine phosphoribosyltransferase (174 aa).

This sequence belongs to the purine/pyrimidine phosphoribosyltransferase family. Homodimer.

Its subcellular location is the cytoplasm. The enzyme catalyses AMP + diphosphate = 5-phospho-alpha-D-ribose 1-diphosphate + adenine. It functions in the pathway purine metabolism; AMP biosynthesis via salvage pathway; AMP from adenine: step 1/1. Its function is as follows. Catalyzes a salvage reaction resulting in the formation of AMP, that is energically less costly than de novo synthesis. This is Adenine phosphoribosyltransferase from Mycobacterium sp. (strain JLS).